Here is a 382-residue protein sequence, read N- to C-terminus: Gap junction alpha-1 protein (382 aa).

Over 2–23 (GDWSALGKLLDKVQAYSTAGGK) the chain is Cytoplasmic. Phosphoserine is present on serine 5. The helical transmembrane segment at 24–44 (VWLSVLFIFRILLLGTAVESA) threads the bilayer. Topologically, residues 45–76 (WGDEQSAFRCNTQQPGCENVCYDKSFPISHVR) are extracellular. 2 disulfide bridges follow: cysteine 54/cysteine 192 and cysteine 187/cysteine 198. The chain crosses the membrane as a helical span at residues 77–97 (FWVLQIIFVSVPTLLYLAHVF). Over 98–155 (YVMRKEEKLNKKEEELKVAQTDGVNVEMHLKQIEIKKFKYGIEEHGKVKMRGGLLRTY) the chain is Cytoplasmic. A Glycyl lysine isopeptide (Lys-Gly) (interchain with G-Cter in SUMO) cross-link involves residue lysine 144. A helical membrane pass occupies residues 156–176 (IISILFKSIFEVAFLLIQWYI). Residues 177–207 (YGFSLSAVYTCKRDPCPHQVDCFLSRPTEKT) lie on the Extracellular side of the membrane. The chain crosses the membrane as a helical span at residues 208–228 (IFIIFMLVVSLVSLALNIIEL). Topologically, residues 229–382 (FYVFFKGVKD…SRPRPDDLEI (154 aa)) are cytoplasmic. Lysine 237 participates in a covalent cross-link: Glycyl lysine isopeptide (Lys-Gly) (interchain with G-Cter in SUMO). Residues 244–382 (SDPYHATSGA…SRPRPDDLEI (139 aa)) are interaction with NOV. Tyrosine 247 is modified (phosphotyrosine). Serine 255 and serine 262 each carry phosphoserine. An interaction with UBQLN4 region spans residues 264–382 (KYAYFNGCSS…SRPRPDDLEI (119 aa)). Residue cysteine 271 is modified to S-nitrosocysteine. At threonine 275 the chain carries Phosphothreonine. The tract at residues 279 to 300 (SPMSPPGYKPVTGDRNNSSCRN) is disordered. A phosphoserine mark is found at serine 306 and serine 314. The span at 317–332 (QNRMGQAGSTISNSHA) shows a compositional bias: polar residues. The segment at 317-382 (QNRMGQAGST…SRPRPDDLEI (66 aa)) is disordered. Phosphoserine; by CK1 is present on serine 325. Threonine 326 bears the Phosphothreonine mark. Phosphoserine; by CK1 is present on residues serine 328 and serine 330. Phosphoserine is present on residues serine 344 and serine 365. The segment covering 362 to 374 (RPSSRASSRASSR) has biased composition (low complexity). Position 368 is a phosphoserine; by PKC/PRKCG and PKC/PRKCD (serine 368). Serine 369 and serine 373 each carry phosphoserine.

Belongs to the connexin family. Alpha-type (group II) subfamily. A connexon is composed of a hexamer of connexins. Interacts with SGSM3. Interacts with RIC1/CIP150. Interacts with CNST and CSNK1D. Interacts (via C-terminus) with TJP1. Interacts (via C-terminus) with SRC (via SH3 domain). Interacts (not ubiquitinated) with UBQLN4 (via UBA domain). Interacts with NOV. Interacts with TMEM65. Interacts with ANK3/ANKG and PKP2. Post-translationally, phosphorylation at Ser-325, Ser-328 and Ser-330 by CK1 modulates gap junction assembly. Phosphorylated at Ser-368 by PRKCG; phosphorylation induces disassembly of gap junction plaques and inhibition of gap junction activity. Phosphorylation at Ser-368 by PRKCD triggers its internalization into small vesicles leading to proteasome-mediated degradation. In terms of processing, sumoylated with SUMO1, SUMO2 and SUMO3, which may regulate the level of functional Cx43 gap junctions at the plasma membrane. May be desumoylated by SENP1 or SENP2. S-nitrosylation at Cys-271 is enriched at the muscle endothelial gap junction in arteries, it augments channel permeability and may regulate of smooth muscle cell to endothelial cell communication. Post-translationally, acetylated in the developing cortex; leading to delocalization from the cell membrane.

It is found in the cell membrane. It localises to the cell junction. The protein localises to the gap junction. Its subcellular location is the endoplasmic reticulum. Gap junction protein that acts as a regulator of bladder capacity. A gap junction consists of a cluster of closely packed pairs of transmembrane channels, the connexons, through which materials of low MW diffuse from one cell to a neighboring cell. May play a critical role in the physiology of hearing by participating in the recycling of potassium to the cochlear endolymph. Negative regulator of bladder functional capacity: acts by enhancing intercellular electrical and chemical transmission, thus sensitizing bladder muscles to cholinergic neural stimuli and causing them to contract. May play a role in cell growth inhibition through the regulation of NOV expression and localization. Plays an essential role in gap junction communication in the ventricles. The sequence is that of Gap junction alpha-1 protein (GJA1) from Macaca fascicularis (Crab-eating macaque).